The chain runs to 552 residues: MSAIALTVSMLALVAVLGLWIGNWKIYGVGLGIGGVLFGGIIVGHFAQTYQIVLNGDMLHFIQEFGLILFVYTIGIQVGPGFFSSLRVSGLRLNCFAILMVVVGGLVTAIIHKLFAVPLPIILGVFSGAVTNTPALGAAQQILTDLGSPPQLVSQMGMGYAMAYPFGICGILLVMWLIRLFFKINIDREAKAFDSSYGQNRELLQTMNVAVRNPNLHGLSVQDVPLLNSDEVVCSRLKRGDLLMVPMPATVIEIGDYLHLVGQRDALEKVRLVVGEEVDVTLSTAGTALQTARVVVTNEAVLGKKIRDLNLKQKYDVVITRLNRAGIELVASNSANLQFGDILNLVGRPEAIEAVSAIVGNAQQKLQQVQMLPVFIGVGLGVLLGSIPLFVPGFPAALRLGLAGGPLVVALILGRIGSIGKLYWFMPPSANLALRELGIVLFLSVVGLKSGGDFINTLVNGDGLAWIGYGAMITGIPLLTVGILARMLVKMNYLTLCGMLAGSMTDPPALAFANGLHPTSGAAALSYATVYPLAMFLRIMSPQILAVLFWTL.

6 helical membrane-spanning segments follow: residues 1 to 21, 26 to 46, 65 to 85, 96 to 116, 119 to 139, and 158 to 178; these read MSAI…GLWI, IYGV…VGHF, FGLI…FFSS, FAIL…KLFA, LPII…LGAA, and MGYA…MWLI. RCK C-terminal domains lie at 192–276 and 279–361; these read AFDS…VVGE and DVTL…IVGN. Helical transmembrane passes span 371-391, 393-413, 439-459, 464-484, 493-513, and 530-550; these read MLPV…PLFV, GFPA…ALIL, IVLF…NTLV, LAWI…VGIL, YLTL…LAFA, and VYPL…VLFW.

Belongs to the AAE transporter (TC 2.A.81) family. YidE subfamily.

The protein resides in the cell membrane. This is Putative transport protein YPTS_4123 from Yersinia pseudotuberculosis serotype IB (strain PB1/+).